A 160-amino-acid chain; its full sequence is MTEPQQQPVFVIEKVYVKDLSLEIPHAPQVFLERESPEINLQLATSDNVIEGEIHEVIVTATVTARLKEKDKVMFLVEAHQAGIFRIRNVPGNEIEPVLGVLCPNILFPYLRETISDTVTRAGFPPVILNPVNFEAIYQQKQQEAAVSQPDQPVDNTTRH.

This sequence belongs to the SecB family. In terms of assembly, homotetramer, a dimer of dimers. One homotetramer interacts with 1 SecA dimer.

It is found in the cytoplasm. In terms of biological role, one of the proteins required for the normal export of preproteins out of the cell cytoplasm. It is a molecular chaperone that binds to a subset of precursor proteins, maintaining them in a translocation-competent state. It also specifically binds to its receptor SecA. The polypeptide is Protein-export protein SecB (Nitrosomonas eutropha (strain DSM 101675 / C91 / Nm57)).